Here is a 147-residue protein sequence, read N- to C-terminus: NAD(P)H-quinone oxidoreductase subunit N (147 aa).

This sequence belongs to the complex I NdhN subunit family. As to quaternary structure, NDH-1 can be composed of about 15 different subunits; different subcomplexes with different compositions have been identified which probably have different functions.

The protein localises to the cellular thylakoid membrane. It catalyses the reaction a plastoquinone + NADH + (n+1) H(+)(in) = a plastoquinol + NAD(+) + n H(+)(out). The catalysed reaction is a plastoquinone + NADPH + (n+1) H(+)(in) = a plastoquinol + NADP(+) + n H(+)(out). Its function is as follows. NDH-1 shuttles electrons from an unknown electron donor, via FMN and iron-sulfur (Fe-S) centers, to quinones in the respiratory and/or the photosynthetic chain. The immediate electron acceptor for the enzyme in this species is believed to be plastoquinone. Couples the redox reaction to proton translocation, and thus conserves the redox energy in a proton gradient. Cyanobacterial NDH-1 also plays a role in inorganic carbon-concentration. The polypeptide is NAD(P)H-quinone oxidoreductase subunit N (Synechococcus sp. (strain JA-3-3Ab) (Cyanobacteria bacterium Yellowstone A-Prime)).